Here is a 530-residue protein sequence, read N- to C-terminus: T-complex protein 1 subunit zeta (530 aa).

Gly-38 is an ADP binding site. Gly-38 is a binding site for ATP. Mg(2+) is bound at residue Asp-89. ADP is bound by residues Gly-90, Thr-91, Thr-92, Ser-93, Thr-157, Lys-158, and Ala-410. ATP-binding residues include Gly-90, Thr-91, and Thr-92. Ala-410, Gly-411, Asp-495, and Lys-500 together coordinate ATP. Residue Asp-495 participates in ADP binding.

Component of the chaperonin-containing T-complex (TRiC), a hexadecamer composed of two identical back-to-back stacked rings enclosing a protein folding chamber. Each ring is made up of eight different subunits: TCP1/CCT1, CCT2, CCT3, CCT4, CCT5, CCT6A/CCT6, CCT7, CCT8. Interacts with PACRG.

It is found in the cytoplasm. The enzyme catalyses ATP + H2O = ADP + phosphate + H(+). Functionally, component of the chaperonin-containing T-complex (TRiC), a molecular chaperone complex that assists the folding of actin, tubulin and other proteins upon ATP hydrolysis. The chain is T-complex protein 1 subunit zeta from Gallus gallus (Chicken).